A 50-amino-acid polypeptide reads, in one-letter code: MKDFADRYTFIRQGKMLVVKILPKEIFVLSFRRIKDKELKKLLEKDYALR.

This is an uncharacterized protein from Haemophilus influenzae (strain ATCC 51907 / DSM 11121 / KW20 / Rd).